A 624-amino-acid polypeptide reads, in one-letter code: Actin-related protein 8 (624 aa).

Methionine 1 bears the N-acetylmethionine mark. The span at 1–25 (MTQAEKGDAENGKEKGGEKEKEQRG) shows a compositional bias: basic and acidic residues. The interval 1–29 (MTQAEKGDAENGKEKGGEKEKEQRGVKRP) is disordered. 2 residues coordinate ATP: serine 55 and threonine 56. A Phosphoserine modification is found at serine 132. An ATP-binding site is contributed by 283–286 (DVGD). Serine 412 bears the Phosphoserine mark. Residues 430 to 460 (SKQEQSAKATADRKSASKPIGFEGDLRGQSS) form a disordered region.

This sequence belongs to the actin family. ARP8 subfamily. Component of the chromatin remodeling INO80 complex; specifically part of a complex module associated with the DBINO domain of INO80. Exists as monomers and dimers, but the dimer is most probably the biologically relevant form required for stable interactions with histones that exploits the twofold symmetry of the nucleosome core.

The protein resides in the nucleus. It is found in the chromosome. In terms of biological role, plays an important role in the functional organization of mitotic chromosomes. Exhibits low basal ATPase activity, and unable to polymerize. Its function is as follows. Proposed core component of the chromatin remodeling INO80 complex which is involved in transcriptional regulation, DNA replication and probably DNA repair. Required for the recruitment of INO80 (and probably the INO80 complex) to sites of DNA damage Strongly prefer nucleosomes and H3-H4 tetramers over H2A-H2B dimers, suggesting it may act as a nucleosome recognition module within the complex. This Ailuropoda melanoleuca (Giant panda) protein is Actin-related protein 8 (ACTR8).